The following is a 30-amino-acid chain: Trypsin inhibitor 4 (30 aa).

Disulfide bonds link C3–C20, C10–C22, and C16–C28.

Belongs to the protease inhibitor I7 (squash-type serine protease inhibitor) family.

It is found in the secreted. Its function is as follows. Inhibits trypsin; probably participates in a plant defense mechanism. In Momordica charantia (Bitter gourd), this protein is Trypsin inhibitor 4.